We begin with the raw amino-acid sequence, 350 residues long: Protein-glutamate methylesterase/protein-glutamine glutaminase 1 (350 aa).

Residues 3–121 form the Response regulatory domain; the sequence is KVLIVEDSPV…RDYDIRARDL (119 aa). Position 54 is a 4-aspartylphosphate (D54). The 195-residue stretch at 148–342 folds into the CheB-type methylesterase domain; sequence PASGEPDIGK…PPEKIARVLV (195 aa). Residues S170, H197, and D290 contribute to the active site.

Belongs to the CheB family. Phosphorylated by CheA. Phosphorylation of the N-terminal regulatory domain activates the methylesterase activity.

The protein localises to the cytoplasm. It catalyses the reaction [protein]-L-glutamate 5-O-methyl ester + H2O = L-glutamyl-[protein] + methanol + H(+). It carries out the reaction L-glutaminyl-[protein] + H2O = L-glutamyl-[protein] + NH4(+). In terms of biological role, involved in chemotaxis. Part of a chemotaxis signal transduction system that modulates chemotaxis in response to various stimuli. Catalyzes the demethylation of specific methylglutamate residues introduced into the chemoreceptors (methyl-accepting chemotaxis proteins or MCP) by CheR. Also mediates the irreversible deamidation of specific glutamine residues to glutamic acid. The chain is Protein-glutamate methylesterase/protein-glutamine glutaminase 1 from Syntrophus aciditrophicus (strain SB).